Consider the following 256-residue polypeptide: MRRMIPTSFSSKFQGVLSMNALRCYVSEFISTFFFVLAAVGSVMSSRKLMAGDVSGPFGVLIPAIANALALSSSVYISWNVSGGHVNPAVTFAMAVAGRISVPTAMFYWTSQMIASVMACLVLKVTVMEQHVPIYKIAGEMTGFGASVLEGVLAFVLVYTVFTASDPRRGLPLAVGPIFIGFVAGANVLAAGPFSGGSMNPACAFGSAMVYGSFKNQAVYWVGPLLGGATAALVYDNVVVPVEDDRGSSTGDAIGV.

M1 bears the N-acetylmethionine mark. 5 consecutive transmembrane segments (helical) span residues 24-44 (CYVS…GSVM), 57-77 (PFGV…SVYI), 89-109 (AVTF…MFYW), 144-164 (FGAS…VFTA), and 171-191 (LPLA…VLAA). The NPA 1 signature appears at 87–89 (NPA). Residues 200 to 202 (NPA) carry the NPA 2 motif. A helical membrane pass occupies residues 222-242 (VGPLLGGATAALVYDNVVVPV). S249 carries the post-translational modification Phosphoserine.

Belongs to the MIP/aquaporin (TC 1.A.8) family. TIP (TC 1.A.8.10) subfamily.

The protein localises to the membrane. Functionally, potential aquaporin, which may facilitate the transport of water and small neutral solutes across cell membranes. The sequence is that of Probable aquaporin TIP5-1 (TIP5-1) from Arabidopsis thaliana (Mouse-ear cress).